The following is a 200-amino-acid chain: MARYTGPSWKVSRRLGISLSGTGKELERRPYAPGQHGPTQRKKISEYGLQQAEKQKLRHMYGLTERQFKNTFNKAGKLQGKHGENFMILLEQRLDNIVYRLGLARTRRAARQLVNHGHITVDGKRVDIPSYQVSVGQVISVREKSAKNSAIAESLEVSSFVPEYVTFDAETLTGSLNRLPERSERAAEINEAFIVEFYSR.

Positions 22-43 are disordered; the sequence is TGKELERRPYAPGQHGPTQRKK. In terms of domain architecture, S4 RNA-binding spans 92 to 170; the sequence is QRLDNIVYRL…VPEYVTFDAE (79 aa).

It belongs to the universal ribosomal protein uS4 family. In terms of assembly, part of the 30S ribosomal subunit. Contacts protein S5. The interaction surface between S4 and S5 is involved in control of translational fidelity.

Its function is as follows. One of the primary rRNA binding proteins, it binds directly to 16S rRNA where it nucleates assembly of the body of the 30S subunit. With S5 and S12 plays an important role in translational accuracy. This chain is Small ribosomal subunit protein uS4, found in Listeria monocytogenes serotype 4b (strain F2365).